A 162-amino-acid chain; its full sequence is Nascent polypeptide-associated complex subunit beta (162 aa).

Disordered stretches follow at residues 1 to 39 (MPVD…NISE) and 130 to 162 (EQAK…DNVE). Residues 24 to 33 (TPRRPGKKVA) are compositionally biased toward basic residues. An NAC-A/B domain is found at 38 to 103 (SEDEKKLSAT…SQQKDIAELI (66 aa)). The span at 146 to 162 (GDDEIPNLVENFEDNVE) shows a compositional bias: acidic residues.

This sequence belongs to the NAC-beta family. In terms of assembly, part of the nascent polypeptide-associated complex (NAC), consisting of EGD2 and EGD1. NAC associates with ribosomes via EGD1.

Its subcellular location is the cytoplasm. It is found in the nucleus. In terms of biological role, component of the nascent polypeptide-associated complex (NAC), a dynamic component of the ribosomal exit tunnel, protecting the emerging polypeptides from interaction with other cytoplasmic proteins to ensure appropriate nascent protein targeting. The NAC complex also promotes mitochondrial protein import by enhancing productive ribosome interactions with the outer mitochondrial membrane and blocks the inappropriate interaction of ribosomes translating non-secretory nascent polypeptides with translocation sites in the membrane of the endoplasmic reticulum. EGD1 may act as a transcription factor that exert a negative effect on the expression of several genes that are transcribed by RNA polymerase II. The chain is Nascent polypeptide-associated complex subunit beta (EGD1) from Yarrowia lipolytica (strain CLIB 122 / E 150) (Yeast).